The sequence spans 542 residues: Apolipoprotein N-acyltransferase (542 aa).

6 helical membrane passes run 26–46, 54–74, 89–109, 113–133, 163–183, and 187–207; these read ASVICCMCGYGLLWRGLLSLV, IWCLAFFWTWSVEGFHFSWML, LLISYLAVTFASFSCLVVLCF, YWGALFWLPGVWVAIESVRYY, WAGQSFVVIATNLGCCSVLVF, and FSYGLWLVCCAFPYFLGGTYY. A CN hydrolase domain is found at 220-499; the sequence is LRVAIVQPGY…PDVLQVSVPV (280 aa). Glutamate 264 functions as the Proton acceptor in the catalytic mechanism. Residue lysine 349 is part of the active site. The Nucleophile role is filled by cysteine 404. A helical transmembrane segment spans residues 509–529; that stretch reads FGDAPLLFVAVSSVLGVVGYF.

It belongs to the CN hydrolase family. Apolipoprotein N-acyltransferase subfamily.

It is found in the cell inner membrane. It carries out the reaction N-terminal S-1,2-diacyl-sn-glyceryl-L-cysteinyl-[lipoprotein] + a glycerophospholipid = N-acyl-S-1,2-diacyl-sn-glyceryl-L-cysteinyl-[lipoprotein] + a 2-acyl-sn-glycero-3-phospholipid + H(+). It functions in the pathway protein modification; lipoprotein biosynthesis (N-acyl transfer). Its function is as follows. Catalyzes the phospholipid dependent N-acylation of the N-terminal cysteine of apolipoprotein, the last step in lipoprotein maturation. The sequence is that of Apolipoprotein N-acyltransferase from Chlamydia muridarum (strain MoPn / Nigg).